The following is a 168-amino-acid chain: ATP synthase F(1) complex subunit delta, mitochondrial (168 aa).

The N-terminal 22 residues, 1-22 (MLPAALLRHPGLRRLVLQARTY), are a transit peptide targeting the mitochondrion. An N6-acetyllysine; alternate mark is found at lysine 136 and lysine 165. N6-succinyllysine; alternate is present on residues lysine 136 and lysine 165.

Belongs to the ATPase epsilon chain family. As to quaternary structure, component of the ATP synthase complex composed at least of ATP5F1A/subunit alpha, ATP5F1B/subunit beta, ATP5MC1/subunit c (homooctomer), MT-ATP6/subunit a, MT-ATP8/subunit 8, ATP5ME/subunit e, ATP5MF/subunit f, ATP5MG/subunit g, ATP5MK/subunit k, ATP5MJ/subunit j, ATP5F1C/subunit gamma, ATP5F1D/subunit delta, ATP5F1E/subunit epsilon, ATP5PF/subunit F6, ATP5PB/subunit b, ATP5PD/subunit d, ATP5PO/subunit OSCP. ATP synthase complex consists of a soluble F(1) head domain (subunits alpha(3) and beta(3)) - the catalytic core - and a membrane F(0) domain - the membrane proton channel (subunits c, a, 8, e, f, g, k and j). These two domains are linked by a central stalk (subunits gamma, delta, and epsilon) rotating inside the F1 region and a stationary peripheral stalk (subunits F6, b, d, and OSCP). Component of a complex composed at least by ATPIF1, ATP5F1A, ATP5F1B, ATP5F1C AND ATP5F1E.

The protein resides in the mitochondrion. It localises to the mitochondrion inner membrane. Subunit delta, of the mitochondrial membrane ATP synthase complex (F(1)F(0) ATP synthase or Complex V) that produces ATP from ADP in the presence of a proton gradient across the membrane which is generated by electron transport complexes of the respiratory chain. ATP synthase complex consist of a soluble F(1) head domain - the catalytic core - and a membrane F(1) domain - the membrane proton channel. These two domains are linked by a central stalk rotating inside the F(1) region and a stationary peripheral stalk. During catalysis, ATP synthesis in the catalytic domain of F(1) is coupled via a rotary mechanism of the central stalk subunits to proton translocation. In vivo, can only synthesize ATP although its ATP hydrolase activity can be activated artificially in vitro. With the central stalk subunit gamma, is essential for the biogenesis of F(1) catalytic part of the ATP synthase complex namely in the formation of F1 assembly intermediate. This chain is ATP synthase F(1) complex subunit delta, mitochondrial, found in Rattus norvegicus (Rat).